A 130-amino-acid chain; its full sequence is Bet1-like SNARE 1-2 (130 aa).

Residues 1–106 (MNFRRENRAS…EKKSNRKSCK (106 aa)) lie on the Cytoplasmic side of the membrane. The t-SNARE coiled-coil homology domain maps to 33 to 95 (AHDERDNDEA…SGTINRFKLV (63 aa)). Positions 40–82 (DEALENLQDRVSFLKRVTGDIHEEVENHNRLLDKVGNKMDSAR) form a coiled coil. A helical; Anchor for type IV membrane protein transmembrane segment spans residues 107 to 122 (LIAYFVLLFLIMYYLI). Residues 123-130 (RLLNYIKG) are Vesicular-facing.

The protein belongs to the BET1 family.

It localises to the golgi apparatus membrane. The protein localises to the endoplasmic reticulum membrane. Functionally, required for vesicular transport from the ER to the Golgi complex. Functions as a SNARE associated with ER-derived vesicles. The protein is Bet1-like SNARE 1-2 (BET12) of Arabidopsis thaliana (Mouse-ear cress).